The sequence spans 414 residues: Esterase FrsA (414 aa).

It belongs to the FrsA family.

It carries out the reaction a carboxylic ester + H2O = an alcohol + a carboxylate + H(+). Its function is as follows. Catalyzes the hydrolysis of esters. This chain is Esterase FrsA, found in Klebsiella pneumoniae subsp. pneumoniae (strain ATCC 700721 / MGH 78578).